The chain runs to 638 residues: 2-isopropylmalate synthase (638 aa).

One can recognise a Pyruvate carboxyltransferase domain in the interval 72 to 346 (PRWCSVDLRD…DPQLDLSNVP (275 aa)). Asp81, His285, His287, and Asn321 together coordinate Mg(2+). The tract at residues 488 to 638 (VEQSGMTAAG…SAINRSQRQR (151 aa)) is regulatory domain.

Belongs to the alpha-IPM synthase/homocitrate synthase family. LeuA type 2 subfamily. As to quaternary structure, homodimer. Mg(2+) serves as cofactor.

It localises to the cytoplasm. The catalysed reaction is 3-methyl-2-oxobutanoate + acetyl-CoA + H2O = (2S)-2-isopropylmalate + CoA + H(+). It functions in the pathway amino-acid biosynthesis; L-leucine biosynthesis; L-leucine from 3-methyl-2-oxobutanoate: step 1/4. Its function is as follows. Catalyzes the condensation of the acetyl group of acetyl-CoA with 3-methyl-2-oxobutanoate (2-ketoisovalerate) to form 3-carboxy-3-hydroxy-4-methylpentanoate (2-isopropylmalate). This chain is 2-isopropylmalate synthase, found in Bifidobacterium longum subsp. infantis (strain ATCC 15697 / DSM 20088 / JCM 1222 / NCTC 11817 / S12).